The chain runs to 320 residues: Mitochondrial thiamine pyrophosphate carrier 1 (320 aa).

3 Solcar repeats span residues 12 to 110 (GTRR…TTQA), 119 to 205 (PQPV…LRPS), and 213 to 308 (PFGS…TLRA). Helical transmembrane passes span 17–35 (VVLA…VAPL), 91–107 (LMYV…YRTT), 125–145 (FVAG…LDLL), 180–197 (GCSA…LFFA), 219–239 (ALAG…LDLV), and 283–300 (GLTV…VTMW).

It belongs to the mitochondrial carrier (TC 2.A.29) family.

The protein localises to the mitochondrion inner membrane. Functionally, mitochondrial transporter that mediates uptake of thiamine pyrophosphate (ThPP) into mitochondria. The polypeptide is Mitochondrial thiamine pyrophosphate carrier 1 (tpc1) (Aspergillus terreus (strain NIH 2624 / FGSC A1156)).